The following is a 330-amino-acid chain: Delta-aminolevulinic acid dehydratase (330 aa).

Residue lysine 203 is the Schiff-base intermediate with substrate of the active site. Arginine 213 and arginine 224 together coordinate 5-aminolevulinate. Glutamate 240 contacts Mg(2+). Lysine 255 acts as the Schiff-base intermediate with substrate in catalysis. Serine 281 and tyrosine 320 together coordinate 5-aminolevulinate.

This sequence belongs to the ALAD family. In terms of assembly, homooctamer.

The catalysed reaction is 2 5-aminolevulinate = porphobilinogen + 2 H2O + H(+). It participates in porphyrin-containing compound metabolism; protoporphyrin-IX biosynthesis; coproporphyrinogen-III from 5-aminolevulinate: step 1/4. In terms of biological role, catalyzes an early step in the biosynthesis of tetrapyrroles. Binds two molecules of 5-aminolevulinate per subunit, each at a distinct site, and catalyzes their condensation to form porphobilinogen. The protein is Delta-aminolevulinic acid dehydratase (hemB) of Streptomyces coelicolor (strain ATCC BAA-471 / A3(2) / M145).